Consider the following 291-residue polypeptide: 4-diphosphocytidyl-2-C-methyl-D-erythritol kinase (291 aa).

Residue Lys10 is part of the active site. An ATP-binding site is contributed by 99–109 (PMGGGLGGGSS). The active site involves Asp141.

The protein belongs to the GHMP kinase family. IspE subfamily. Homodimer.

The catalysed reaction is 4-CDP-2-C-methyl-D-erythritol + ATP = 4-CDP-2-C-methyl-D-erythritol 2-phosphate + ADP + H(+). The protein operates within isoprenoid biosynthesis; isopentenyl diphosphate biosynthesis via DXP pathway; isopentenyl diphosphate from 1-deoxy-D-xylulose 5-phosphate: step 3/6. Functionally, catalyzes the phosphorylation of the position 2 hydroxy group of 4-diphosphocytidyl-2C-methyl-D-erythritol. The sequence is that of 4-diphosphocytidyl-2-C-methyl-D-erythritol kinase from Photorhabdus laumondii subsp. laumondii (strain DSM 15139 / CIP 105565 / TT01) (Photorhabdus luminescens subsp. laumondii).